We begin with the raw amino-acid sequence, 346 residues long: Large ribosomal subunit protein uL3 (346 aa).

Residues 324–346 (RPPKKKPPVERPQITYVSRESKQ) are disordered.

Belongs to the universal ribosomal protein uL3 family. As to quaternary structure, part of the 50S ribosomal subunit. Forms a cluster with proteins L14 and L24e.

One of the primary rRNA binding proteins, it binds directly near the 3'-end of the 23S rRNA, where it nucleates assembly of the 50S subunit. This Thermococcus kodakarensis (strain ATCC BAA-918 / JCM 12380 / KOD1) (Pyrococcus kodakaraensis (strain KOD1)) protein is Large ribosomal subunit protein uL3.